Consider the following 365-residue polypeptide: Terpene cyclase 4 (365 aa).

A compositionally biased stretch (pro residues) spans 1–11 (MVPSLITPPPS). The tract at residues 1 to 20 (MVPSLITPPPSRSGEATPQK) is disordered. Asp118, Asn260, and Ser264 together coordinate Mg(2+). Residues 118-122 (DDPFD) carry the D(D/E)XX(D/E) motif motif. An NSE motif motif is present at residues 260–268 (NDLCSYRKD). The short motif at 341–348 (WSLYTFRY) is the WxxxxxRY motif element. Residues Arg347 and Tyr348 each contribute to the (2E,6E)-farnesyl diphosphate site.

It belongs to the terpene synthase family. Homodimer. Mg(2+) is required as a cofactor.

The catalysed reaction is (2E,6E)-farnesyl diphosphate + H2O = koraiol + diphosphate. The protein operates within sesquiterpene biosynthesis. Functionally, terpene cyclase that catalyzes the cyclization of farnesyl diphosphate (FPP) to the sesquiterpene koraiol. This chain is Terpene cyclase 4, found in Gibberella fujikuroi (strain CBS 195.34 / IMI 58289 / NRRL A-6831) (Bakanae and foot rot disease fungus).